Here is a 193-residue protein sequence, read N- to C-terminus: Potassium-transporting ATPase KdpC subunit (193 aa).

Residues isoleucine 14–alanine 34 traverse the membrane as a helical segment.

The protein belongs to the KdpC family. In terms of assembly, the system is composed of three essential subunits: KdpA, KdpB and KdpC.

It is found in the cell membrane. Part of the high-affinity ATP-driven potassium transport (or Kdp) system, which catalyzes the hydrolysis of ATP coupled with the electrogenic transport of potassium into the cytoplasm. This subunit acts as a catalytic chaperone that increases the ATP-binding affinity of the ATP-hydrolyzing subunit KdpB by the formation of a transient KdpB/KdpC/ATP ternary complex. In Bacillus cereus (strain ATCC 14579 / DSM 31 / CCUG 7414 / JCM 2152 / NBRC 15305 / NCIMB 9373 / NCTC 2599 / NRRL B-3711), this protein is Potassium-transporting ATPase KdpC subunit.